Reading from the N-terminus, the 975-residue chain is E3 ubiquitin-protein ligase BRE1A (975 aa).

Residues 1-30 are disordered; sequence MSGIGNKRAAGEPGTSMPPEKKAAVEDSGT. Residue lysine 21 is modified to N6-acetyllysine. A Phosphoserine modification is found at serine 41. Positions 43 to 90 form a coiled coil; that stretch reads TEELDIRTLQTKNRKLAEMLDQRQAIEDELREHIEKLERRQATDDASL. The tract at residues 125-155 is disordered; sequence KALVVPEPEPDSDSNQERKDDRERGEGQEPA. Residues serine 136 and serine 138 each carry the phosphoserine modification. A compositionally biased stretch (basic and acidic residues) spans 139–151; it reads NQERKDDRERGEG. Coiled-coil stretches lie at residues 168 to 375 and 429 to 898; these read EEME…EQVV and SLHK…TTKK. N6-acetyllysine occurs at positions 348 and 510. Positions 507 to 622 are disordered; it reads DLNKTRLRSG…GKHDDGRKKE (116 aa). Serine 522 carries the phosphoserine modification. Basic and acidic residues predominate over residues 527–540; it reads EDPKDEPAELKPDS. Low complexity predominate over residues 543-552; the sequence is LSSQSSASKA. Residues 558–622 show a composition bias toward basic and acidic residues; sequence NEIKSKRDEE…GKHDDGRKKE (65 aa). A Phosphoserine modification is found at serine 562. Residues 922 to 961 form an RING-type zinc finger; the sequence is CPCCNMRKKDAVLTKCFHVFCFECVKTRYDTRQRKCPKCN.

It belongs to the BRE1 family. As to quaternary structure, component of the RNF20/40 complex (also known as BRE1 complex) probably composed of 2 copies of RNF20/BRE1A and 2 copies of RNF40/BRE1B. Interacts with UBE2E1/UBCH6. Interacts with p53/TP53 and WAC. Interacts with PAF1; the interaction mediates the association of the PAF1 and RNF20/40 complexes which is a prerequsite for recruitment of UBE2A/B. Interacts with isoform 1 and isoform 2 of PA2G4. Interacts with FBXL19. (Microbial infection) Interacts with human herpesvirus 8 (KSHV) protein RTA/ORF50; this interaction targets the SMC5-SMC6 complex for proteasomal degradation. As to expression, expressed in the normal brain and also in malignant gliomas (at protein level).

The protein resides in the nucleus. The catalysed reaction is S-ubiquitinyl-[E2 ubiquitin-conjugating enzyme]-L-cysteine + [acceptor protein]-L-lysine = [E2 ubiquitin-conjugating enzyme]-L-cysteine + N(6)-ubiquitinyl-[acceptor protein]-L-lysine.. It participates in protein modification; protein ubiquitination. Its function is as follows. Component of the RNF20/40 E3 ubiquitin-protein ligase complex that mediates monoubiquitination of 'Lys-120' of histone H2B (H2BK120ub1). H2BK120ub1 gives a specific tag for epigenetic transcriptional activation and is also prerequisite for histone H3 'Lys-4' and 'Lys-79' methylation (H3K4me and H3K79me, respectively). It thereby plays a central role inb histone code and gene regulation. The RNF20/40 complex forms a H2B ubiquitin ligase complex in cooperation with the E2 enzyme UBE2A or UBE2B; reports about the cooperation with UBE2E1/UBCH are contradictory. Required for transcriptional activation of Hox genes. Recruited to the MDM2 promoter, probably by being recruited by p53/TP53, and thereby acts as a transcriptional coactivator. Mediates the polyubiquitination of isoform 2 of PA2G4 in cancer cells leading to its proteasome-mediated degradation. (Microbial infection) Promotes the human herpesvirus 8 (KSHV) lytic cycle by inducing the expression of lytic viral genes including the latency switch gene RTA/ORF50. This is E3 ubiquitin-protein ligase BRE1A (RNF20) from Homo sapiens (Human).